Reading from the N-terminus, the 167-residue chain is Probable host range protein 2 (167 aa).

Belongs to the poxviridae C7 protein family.

Functionally, plays a role for multiplication of the virus in different cell types. The protein is Probable host range protein 2 of Yaba monkey tumor virus (strain VR587) (YMTV).